Here is a 200-residue protein sequence, read N- to C-terminus: Protein GrpE (200 aa).

Residues 1–25 (MMSKQNKKDWKKFKDEHKEEHKVEN) are compositionally biased toward basic and acidic residues. Residues 1-52 (MMSKQNKKDWKKFKDEHKEEHKVENEILEEETDEESQHQEPALGHPSYTALE) form a disordered region.

Belongs to the GrpE family. In terms of assembly, homodimer.

The protein resides in the cytoplasm. Participates actively in the response to hyperosmotic and heat shock by preventing the aggregation of stress-denatured proteins, in association with DnaK and GrpE. It is the nucleotide exchange factor for DnaK and may function as a thermosensor. Unfolded proteins bind initially to DnaJ; upon interaction with the DnaJ-bound protein, DnaK hydrolyzes its bound ATP, resulting in the formation of a stable complex. GrpE releases ADP from DnaK; ATP binding to DnaK triggers the release of the substrate protein, thus completing the reaction cycle. Several rounds of ATP-dependent interactions between DnaJ, DnaK and GrpE are required for fully efficient folding. This chain is Protein GrpE, found in Legionella pneumophila subsp. pneumophila (strain Philadelphia 1 / ATCC 33152 / DSM 7513).